A 320-amino-acid polypeptide reads, in one-letter code: Aminoacyl tRNA synthase complex-interacting multifunctional protein 2 (320 aa).

Residues H31–S51 form a disordered region. The residue at position 36 (S36) is a Phosphoserine. Residues T82–P162 form an interaction with PRKN region. The interval P162–H225 is interaction with TP53. The region spanning L220–Q317 is the GST C-terminal domain.

Part of the multisynthetase complex (MSC), a multisubunit complex that groups tRNA ligases for Arg (RARS1), Asp (DARS1), Gln (QARS1), Ile (IARS1), Leu (LARS1), Lys (KARS1), Met (MARS1) the bifunctional ligase for Glu and Pro (EPRS1) and the auxiliary subunits AIMP1/p43, AIMP2/p38 and EEF1E1/p18. Interacts (via N-terminus) with KARS1. Interacts with EPRS1. Forms a linear complex that contains MARS1, EEF1E1, EPRS1 and AIMP2 that is at the core of the multisubunit complex. Binds FUBP1 (via C-terminus). Interacts in both its unphosphorylated and phosphorylated forms with p53/TP53 (via N-terminus) in the nucleus following UV irradiation. Interacts (via N-terminus) with PRKN/parkin (via first RING-type domain). Interacts with TARS3. Phosphorylated on serine residues in response to UV irradiation. In terms of processing, ubiquitinated by PRKN, leading to its degradation by the proteasome.

It localises to the cytoplasm. The protein resides in the cytosol. The protein localises to the nucleus. Required for assembly and stability of the aminoacyl-tRNA synthase complex. Mediates ubiquitination and degradation of FUBP1, a transcriptional activator of MYC, leading to MYC down-regulation which is required for aveolar type II cell differentiation. Blocks MDM2-mediated ubiquitination and degradation of p53/TP53. Functions as a proapoptotic factor. The sequence is that of Aminoacyl tRNA synthase complex-interacting multifunctional protein 2 (Aimp2) from Rattus norvegicus (Rat).